A 292-amino-acid polypeptide reads, in one-letter code: UDP-3-O-acyl-N-acetylglucosamine deacetylase (292 aa).

Zn(2+)-binding residues include His75, His231, and Asp235. His258 acts as the Proton donor in catalysis.

Belongs to the LpxC family. The cofactor is Zn(2+).

It catalyses the reaction a UDP-3-O-[(3R)-3-hydroxyacyl]-N-acetyl-alpha-D-glucosamine + H2O = a UDP-3-O-[(3R)-3-hydroxyacyl]-alpha-D-glucosamine + acetate. Its pathway is glycolipid biosynthesis; lipid IV(A) biosynthesis; lipid IV(A) from (3R)-3-hydroxytetradecanoyl-[acyl-carrier-protein] and UDP-N-acetyl-alpha-D-glucosamine: step 2/6. Its function is as follows. Catalyzes the hydrolysis of UDP-3-O-myristoyl-N-acetylglucosamine to form UDP-3-O-myristoylglucosamine and acetate, the committed step in lipid A biosynthesis. The polypeptide is UDP-3-O-acyl-N-acetylglucosamine deacetylase (Nautilia profundicola (strain ATCC BAA-1463 / DSM 18972 / AmH)).